A 1589-amino-acid chain; its full sequence is Centrosomal protein of 170 kDa protein B (1589 aa).

The FHA domain occupies 23–73 (IFVGREECELMLQSRSVDKQHAVINYDQDRDEHWVKDLGSLNGTFVNDMRI). 4 disordered regions span residues 130-261 (RSEA…GAAP), 287-309 (ITKFSLRQRRPPGKEATPGEMVS), 325-388 (LLHR…RLQR), and 409-583 (FDED…EVEE). 2 stretches are compositionally biased toward basic and acidic residues: residues 147–156 (RPEKGDRRPG) and 243–253 (PAHEMPTKDAE). Basic and acidic residues predominate over residues 330–344 (GPGDDRHSTKSDLPV). Phosphoserine occurs at positions 360 and 421. Composition is skewed to basic and acidic residues over residues 430–446 (PKADKRRGPTPADRDRP) and 467–476 (LKREKTEERL). The segment covering 478–489 (SPSPASRTPARP) has biased composition (low complexity). 2 positions are modified to phosphoserine: Ser480 and Ser492. A compositionally biased stretch (pro residues) spans 520 to 530 (EKVPPVLPAPL). Ser536 is subject to Phosphoserine. Pro residues predominate over residues 538–548 (VGPPTPPPAPT). Thr542 carries the phosphothreonine modification. 16 positions are modified to phosphoserine: Ser597, Ser619, Ser655, Ser711, Ser721, Ser746, Ser748, Ser751, Ser753, Ser772, Ser829, Ser853, Ser954, Ser972, Ser986, and Ser988. Disordered stretches follow at residues 598 to 895 (PELS…LQDL), 934 to 1316 (DAEC…PYGF), 1350 to 1374 (DGDTLGSSEPAHSASLSNMPSTPAS), and 1532 to 1552 (AQPGLGKGRVAAQSPPSPASA). Positions 711-722 (SPAGPESSRRSG) are enriched in low complexity. A compositionally biased stretch (polar residues) spans 957 to 972 (DTASTVSLRSGKSGPS). Residues 1029–1038 (SAIRRGHRPR) are compositionally biased toward basic residues. Phosphoserine is present on residues Ser1135, Ser1179, and Ser1199. Residues 1221–1230 (AANTATTTGP) are compositionally biased toward polar residues. The segment covering 1286–1301 (PRAGSSSRARSRAPGP) has biased composition (low complexity). Thr1304 is modified (phosphothreonine). Phosphoserine is present on residues Ser1356 and Ser1362. Polar residues predominate over residues 1363–1374 (ASLSNMPSTPAS). The span at 1542 to 1552 (AAQSPPSPASA) shows a compositional bias: low complexity. Residues Ser1545 and Ser1548 each carry the phosphoserine modification.

This sequence belongs to the CEP170 family.

The protein localises to the cytoplasm. It is found in the cytoskeleton. Its function is as follows. Plays a role in microtubule organization. The polypeptide is Centrosomal protein of 170 kDa protein B (CEP170B) (Homo sapiens (Human)).